Reading from the N-terminus, the 111-residue chain is UPF0060 membrane protein Pden_1837 (111 aa).

4 helical membrane-spanning segments follow: residues 7–27, 30–50, 62–82, and 91–111; these read IAVY…FWAW, LGKS…FAWL, AYAA…WLTE, and ILGG…PRAA.

Belongs to the UPF0060 family.

It localises to the cell inner membrane. This is UPF0060 membrane protein Pden_1837 from Paracoccus denitrificans (strain Pd 1222).